The primary structure comprises 184 residues: GTP cyclohydrolase 1 (184 aa).

3 residues coordinate Zn(2+): Cys75, His78, and Cys146.

This sequence belongs to the GTP cyclohydrolase I family. In terms of assembly, homomer.

It catalyses the reaction GTP + H2O = 7,8-dihydroneopterin 3'-triphosphate + formate + H(+). The protein operates within cofactor biosynthesis; 7,8-dihydroneopterin triphosphate biosynthesis; 7,8-dihydroneopterin triphosphate from GTP: step 1/1. In Teredinibacter turnerae (strain ATCC 39867 / T7901), this protein is GTP cyclohydrolase 1.